Here is a 274-residue protein sequence, read N- to C-terminus: Thiazole synthase (274 aa).

Lys-111 acts as the Schiff-base intermediate with DXP in catalysis. 1-deoxy-D-xylulose 5-phosphate-binding positions include Gly-172, 198 to 199 (AG), and 220 to 221 (NT).

The protein belongs to the ThiG family. Homotetramer. Forms heterodimers with either ThiH or ThiS.

The protein resides in the cytoplasm. It catalyses the reaction [ThiS sulfur-carrier protein]-C-terminal-Gly-aminoethanethioate + 2-iminoacetate + 1-deoxy-D-xylulose 5-phosphate = [ThiS sulfur-carrier protein]-C-terminal Gly-Gly + 2-[(2R,5Z)-2-carboxy-4-methylthiazol-5(2H)-ylidene]ethyl phosphate + 2 H2O + H(+). Its pathway is cofactor biosynthesis; thiamine diphosphate biosynthesis. In terms of biological role, catalyzes the rearrangement of 1-deoxy-D-xylulose 5-phosphate (DXP) to produce the thiazole phosphate moiety of thiamine. Sulfur is provided by the thiocarboxylate moiety of the carrier protein ThiS. In vitro, sulfur can be provided by H(2)S. This is Thiazole synthase from Gloeobacter violaceus (strain ATCC 29082 / PCC 7421).